The primary structure comprises 401 residues: Glutamyl-tRNA reductase (401 aa).

Substrate contacts are provided by residues 45-48, S101, 106-108, and Q112; these read TCNR and EDQ. Residue C46 is the Nucleophile of the active site. 177-182 is a binding site for NADP(+); it reads GYGDVG.

The protein belongs to the glutamyl-tRNA reductase family. In terms of assembly, homodimer.

It catalyses the reaction (S)-4-amino-5-oxopentanoate + tRNA(Glu) + NADP(+) = L-glutamyl-tRNA(Glu) + NADPH + H(+). It participates in porphyrin-containing compound metabolism; protoporphyrin-IX biosynthesis; 5-aminolevulinate from L-glutamyl-tRNA(Glu): step 1/2. Its function is as follows. Catalyzes the NADPH-dependent reduction of glutamyl-tRNA(Glu) to glutamate 1-semialdehyde (GSA). This is Glutamyl-tRNA reductase from Clostridium botulinum (strain Eklund 17B / Type B).